We begin with the raw amino-acid sequence, 215 residues long: Ribonuclease T (215 aa).

Residues 20-194 form the Exonuclease domain; it reads VVIDVETAGF…YDTERTAVLF (175 aa). Mg(2+) is bound by residues Asp-23, Glu-25, His-181, and Asp-186. His-181 serves as the catalytic Proton donor/acceptor.

It belongs to the RNase T family. In terms of assembly, homodimer. The cofactor is Mg(2+).

Its function is as follows. Trims short 3' overhangs of a variety of RNA species, leaving a one or two nucleotide 3' overhang. Responsible for the end-turnover of tRNA: specifically removes the terminal AMP residue from uncharged tRNA (tRNA-C-C-A). Also appears to be involved in tRNA biosynthesis. This chain is Ribonuclease T, found in Shigella dysenteriae serotype 1 (strain Sd197).